The following is a 159-amino-acid chain: Sumo-conjugating enzyme ubc9 (159 aa).

The UBC core domain maps to 4–157; it reads ISSARLSEER…VKAQSKVYPP (154 aa). The active-site Glycyl thioester intermediate is the Cys-93.

This sequence belongs to the ubiquitin-conjugating enzyme family.

The protein localises to the nucleus. It participates in protein modification; protein sumoylation. Functionally, accepts the ubiquitin-like protein sumo from the E1 complex and catalyzes its covalent attachment to other proteins with the help of an E3 ligase. The polypeptide is Sumo-conjugating enzyme ubc9 (ubc9) (Dictyostelium discoideum (Social amoeba)).